Consider the following 163-residue polypeptide: NADPH-dependent 7-cyano-7-deazaguanine reductase (163 aa).

The active-site Thioimide intermediate is C54. D61 (proton donor) is an active-site residue. Substrate-binding positions include 76–78 (VES) and 95–96 (HE).

The protein belongs to the GTP cyclohydrolase I family. QueF type 1 subfamily.

Its subcellular location is the cytoplasm. The catalysed reaction is 7-aminomethyl-7-carbaguanine + 2 NADP(+) = 7-cyano-7-deazaguanine + 2 NADPH + 3 H(+). The protein operates within tRNA modification; tRNA-queuosine biosynthesis. Its function is as follows. Catalyzes the NADPH-dependent reduction of 7-cyano-7-deazaguanine (preQ0) to 7-aminomethyl-7-deazaguanine (preQ1). This chain is NADPH-dependent 7-cyano-7-deazaguanine reductase, found in Streptococcus thermophilus (strain CNRZ 1066).